Reading from the N-terminus, the 313-residue chain is Homoserine O-succinyltransferase (313 aa).

The Acyl-thioester intermediate role is filled by C142. Residues K163 and S192 each contribute to the substrate site. The Proton acceptor role is filled by H235. The active site involves E237. Residue R249 participates in substrate binding.

It belongs to the MetA family.

The protein resides in the cytoplasm. It catalyses the reaction L-homoserine + succinyl-CoA = O-succinyl-L-homoserine + CoA. Its pathway is amino-acid biosynthesis; L-methionine biosynthesis via de novo pathway; O-succinyl-L-homoserine from L-homoserine: step 1/1. In terms of biological role, transfers a succinyl group from succinyl-CoA to L-homoserine, forming succinyl-L-homoserine. The protein is Homoserine O-succinyltransferase of Shewanella oneidensis (strain ATCC 700550 / JCM 31522 / CIP 106686 / LMG 19005 / NCIMB 14063 / MR-1).